A 1023-amino-acid chain; its full sequence is Sodium/potassium-transporting ATPase subunit alpha-1 (1023 aa).

Positions 1–5 (MGLGK) are excised as a propeptide. The segment covering 1–11 (MGLGKGKDEYK) has biased composition (basic and acidic residues). Residues 1–33 (MGLGKGKDEYKLAATSEDGGKKDKKAKAKKDMD) are disordered. The Cytoplasmic portion of the chain corresponds to 6-87 (GKDEYKLAAT…NALTPPPTTP (82 aa)). S16 carries the phosphoserine; by PKC modification. The tract at residues 82-84 (PPP) is interaction with phosphoinositide-3 kinase. Residues 88-108 (EWVKFCKQLFGGFSMLLWIGA) traverse the membrane as a helical segment. Over 109 to 131 (ILCFLAYGIQAASEDEPANDNLY) the chain is Extracellular. Residues 132 to 152 (LGIVLSAVVIITGCFSYYQEA) form a helical membrane-spanning segment. Topologically, residues 153 to 288 (KSSKIMESFK…GGKTPIAIEI (136 aa)) are cytoplasmic. Residues 216–237 (SSLTGESEPQTRSPDFSNENPL) form a disordered region. Residues 289-308 (EHFIHIITGVAVFLGVSFFI) traverse the membrane as a helical segment. Topologically, residues 309-320 (LSLILGYNWLEA) are extracellular. Residues 321–338 (VIFLIGIIVANVPEGLLA) traverse the membrane as a helical segment. The Cytoplasmic segment spans residues 339–772 (TVTVCLTLTA…EEGRLIFDNL (434 aa)). D376 acts as the 4-aspartylphosphate intermediate in catalysis. An ATP-binding site is contributed by K487. D717 and D721 together coordinate Mg(2+). Residues 773 to 792 (KKSIAYTLTSNIPEISPFLL) form a helical membrane-spanning segment. Residues 793 to 802 (FIIANIPLPL) lie on the Extracellular side of the membrane. A helical transmembrane segment spans residues 803–823 (GTVTILCIDLGTDMVPAISLA). Residues 824 to 843 (YEKAESDIMKRQPRNPKTDK) are Cytoplasmic-facing. Residues 844-866 (LVNERLISIAYGQIGMMQATAGF) traverse the membrane as a helical segment. Over 867–918 (FTYFVILAENGFLPMDLIGVRVLWDDKYVNDLEDSYGQQWTYERRKIVEYSC) the chain is Extracellular. A helical transmembrane segment spans residues 919–938 (HTAFFASIVIVQWADLIICK). Over 939–951 (TRRNSIVQQGMTN) the chain is Cytoplasmic. Position 943 is a phosphoserine; by PKA (S943). Residues 952–970 (RILIFGLFEETALAAFLSY) traverse the membrane as a helical segment. At 971–985 (CPGMDVALRMYPMKP) the chain is on the extracellular side. Residues 986-1006 (LWWFCAFPYSLLIFLYDEARR) form a helical membrane-spanning segment. Residues 1007 to 1023 (YILRRNPGGWVEKETYY) are Cytoplasmic-facing.

This sequence belongs to the cation transport ATPase (P-type) (TC 3.A.3) family. Type IIC subfamily. The sodium/potassium-transporting ATPase is composed of a catalytic alpha subunit, an auxiliary non-catalytic beta subunit and an additional regulatory subunit.

It is found in the cell membrane. It localises to the sarcolemma. It catalyses the reaction K(+)(out) + Na(+)(in) + ATP + H2O = K(+)(in) + Na(+)(out) + ADP + phosphate + H(+). In terms of biological role, this is the catalytic component of the active enzyme, which catalyzes the hydrolysis of ATP coupled with the exchange of sodium and potassium ions across the plasma membrane. This action creates the electrochemical gradient of sodium and potassium ions, providing the energy for active transport of various nutrients. The protein is Sodium/potassium-transporting ATPase subunit alpha-1 (atp1a1) of Oreochromis mossambicus (Mozambique tilapia).